The primary structure comprises 188 residues: dCTP deaminase (188 aa).

DCTP is bound by residues 111–116, 135–137, Gln-156, Tyr-170, and Gln-180; these read KSTYAR and TLE. Residue Glu-137 is the Proton donor/acceptor of the active site.

This sequence belongs to the dCTP deaminase family. As to quaternary structure, homotrimer.

The enzyme catalyses dCTP + H2O + H(+) = dUTP + NH4(+). It participates in pyrimidine metabolism; dUMP biosynthesis; dUMP from dCTP (dUTP route): step 1/2. Functionally, catalyzes the deamination of dCTP to dUTP. The protein is dCTP deaminase of Pseudomonas savastanoi pv. phaseolicola (strain 1448A / Race 6) (Pseudomonas syringae pv. phaseolicola (strain 1448A / Race 6)).